The chain runs to 130 residues: Iron-sulfur cluster insertion protein ErpA (130 aa).

The iron-sulfur cluster site is built by Cys-58, Cys-122, and Cys-124.

This sequence belongs to the HesB/IscA family. In terms of assembly, homodimer. Iron-sulfur cluster is required as a cofactor.

Functionally, required for insertion of 4Fe-4S clusters for at least IspG. This is Iron-sulfur cluster insertion protein ErpA from Stenotrophomonas maltophilia (strain R551-3).